The chain runs to 184 residues: ATP synthase subunit b, chloroplastic (184 aa).

A helical membrane pass occupies residues 27–49; it reads LATNPINLSVVFGVLIFFGKGVL.

It belongs to the ATPase B chain family. In terms of assembly, F-type ATPases have 2 components, F(1) - the catalytic core - and F(0) - the membrane proton channel. F(1) has five subunits: alpha(3), beta(3), gamma(1), delta(1), epsilon(1). F(0) has four main subunits: a(1), b(1), b'(1) and c(10-14). The alpha and beta chains form an alternating ring which encloses part of the gamma chain. F(1) is attached to F(0) by a central stalk formed by the gamma and epsilon chains, while a peripheral stalk is formed by the delta, b and b' chains.

The protein localises to the plastid. The protein resides in the chloroplast thylakoid membrane. F(1)F(0) ATP synthase produces ATP from ADP in the presence of a proton or sodium gradient. F-type ATPases consist of two structural domains, F(1) containing the extramembraneous catalytic core and F(0) containing the membrane proton channel, linked together by a central stalk and a peripheral stalk. During catalysis, ATP synthesis in the catalytic domain of F(1) is coupled via a rotary mechanism of the central stalk subunits to proton translocation. In terms of biological role, component of the F(0) channel, it forms part of the peripheral stalk, linking F(1) to F(0). The protein is ATP synthase subunit b, chloroplastic of Arabis hirsuta (Hairy rock-cress).